The following is a 236-amino-acid chain: MRITWFGHSAFRLDFGASHVLIDPFFTGNPAFEGGDAARASAVEGATHILITHGHGDHVGDTLAVAGETGAKVVTNYDLCMWLASKGLTNFDPMNTGGTTDQGAFRVTLVHADHSAGMSEAGVTVPLGLPNGIIVRAAGEPTVYHMGDTDIFGDMALIQEIYRPDVLMVPIGDRFTMGAETAALAVRKFFAPKAVIPCHYGSFPIIAPSADAFVSALDGSGIQVVVPHKGTAVTIP.

Belongs to the UPF0173 family.

This is UPF0173 metal-dependent hydrolase Mnod_3315 from Methylobacterium nodulans (strain LMG 21967 / CNCM I-2342 / ORS 2060).